Reading from the N-terminus, the 126-residue chain is Fatty acid-binding protein 1, liver (126 aa).

This sequence belongs to the calycin superfamily. Fatty-acid binding protein (FABP) family.

Its subcellular location is the cytoplasm. Its function is as follows. Binds free fatty acids and their coenzyme A derivatives, bilirubin, and some other small molecules in the cytoplasm. May be involved in intracellular lipid transport. The specificity of axolotl L-FABP differs from that of LB-FABP. The chain is Fatty acid-binding protein 1, liver from Ambystoma mexicanum (Axolotl).